The chain runs to 398 residues: Methionine import ATP-binding protein MetN 2 (398 aa).

Residues 43–282 (VSLEQVGKVF…PRHGATRALL (240 aa)) enclose the ABC transporter domain. 79–86 (GRSGAGKS) serves as a coordination point for ATP.

This sequence belongs to the ABC transporter superfamily. Methionine importer (TC 3.A.1.24) family. As to quaternary structure, the complex is composed of two ATP-binding proteins (MetN), two transmembrane proteins (MetI) and a solute-binding protein (MetQ).

The protein localises to the cell inner membrane. The enzyme catalyses L-methionine(out) + ATP + H2O = L-methionine(in) + ADP + phosphate + H(+). It carries out the reaction D-methionine(out) + ATP + H2O = D-methionine(in) + ADP + phosphate + H(+). In terms of biological role, part of the ABC transporter complex MetNIQ involved in methionine import. Responsible for energy coupling to the transport system. The protein is Methionine import ATP-binding protein MetN 2 of Burkholderia lata (strain ATCC 17760 / DSM 23089 / LMG 22485 / NCIMB 9086 / R18194 / 383).